The primary structure comprises 418 residues: Serine hydroxymethyltransferase (418 aa).

(6S)-5,6,7,8-tetrahydrofolate is bound by residues Leu121 and 125–127; that span reads GHL. Lys230 is subject to N6-(pyridoxal phosphate)lysine. Residue 355 to 357 coordinates (6S)-5,6,7,8-tetrahydrofolate; the sequence is SPF.

This sequence belongs to the SHMT family. Homodimer. It depends on pyridoxal 5'-phosphate as a cofactor.

The protein resides in the cytoplasm. The enzyme catalyses (6R)-5,10-methylene-5,6,7,8-tetrahydrofolate + glycine + H2O = (6S)-5,6,7,8-tetrahydrofolate + L-serine. Its pathway is one-carbon metabolism; tetrahydrofolate interconversion. It functions in the pathway amino-acid biosynthesis; glycine biosynthesis; glycine from L-serine: step 1/1. Catalyzes the reversible interconversion of serine and glycine with tetrahydrofolate (THF) serving as the one-carbon carrier. This reaction serves as the major source of one-carbon groups required for the biosynthesis of purines, thymidylate, methionine, and other important biomolecules. Also exhibits THF-independent aldolase activity toward beta-hydroxyamino acids, producing glycine and aldehydes, via a retro-aldol mechanism. This chain is Serine hydroxymethyltransferase, found in Streptococcus pyogenes serotype M1.